Reading from the N-terminus, the 485-residue chain is NADH-quinone oxidoreductase subunit N (485 aa).

Transmembrane regions (helical) follow at residues 8 to 28 (LIAL…MLCI), 35 to 55 (FINS…LWFV), 75 to 95 (FYTG…YAWL), 105 to 125 (FYLL…ANHL), 127 to 147 (ALFL…GYAF), 159 to 179 (YTLL…LVYA), 203 to 223 (LLAG…LVPF), 235 to 255 (PVPV…AVVM), 271 to 291 (LVLA…ALSQ), 303 to 323 (IAHL…TLAL), 326 to 346 (VGVY…VVSL), 371 to 393 (LLSS…LGFI), 406 to 426 (HLGW…FYYL), and 449 to 469 (ALTA…LLGL).

It belongs to the complex I subunit 2 family. In terms of assembly, NDH-1 is composed of 13 different subunits. Subunits NuoA, H, J, K, L, M, N constitute the membrane sector of the complex.

It localises to the cell inner membrane. It catalyses the reaction a quinone + NADH + 5 H(+)(in) = a quinol + NAD(+) + 4 H(+)(out). In terms of biological role, NDH-1 shuttles electrons from NADH, via FMN and iron-sulfur (Fe-S) centers, to quinones in the respiratory chain. The immediate electron acceptor for the enzyme in this species is believed to be ubiquinone. Couples the redox reaction to proton translocation (for every two electrons transferred, four hydrogen ions are translocated across the cytoplasmic membrane), and thus conserves the redox energy in a proton gradient. The polypeptide is NADH-quinone oxidoreductase subunit N (Sodalis glossinidius (strain morsitans)).